The chain runs to 931 residues: Adhesion G protein-coupled receptor E1 (931 aa).

The signal sequence occupies residues Met1–Gly27. Over Gln28–Glu644 the chain is Extracellular. EGF-like domains are found at residues Gly32–Gln80 and Asp81–Ala132. 21 disulfides stabilise this stretch: Cys36–Cys48, Cys42–Cys57, Cys59–Cys79, Cys85–Cys98, Cys92–Cys107, Cys109–Cys131, Cys137–Cys149, Cys143–Cys158, Cys160–Cys171, Cys177–Cys189, Cys183–Cys198, Cys200–Cys220, Cys226–Cys239, Cys233–Cys248, Cys250–Cys270, Cys276–Cys286, Cys280–Cys295, Cys297–Cys317, Cys323–Cys336, Cys330–Cys345, and Cys347–Cys366. Residues Asp133–Glu172 form the EGF-like 3; calcium-binding domain. 2 N-linked (GlcNAc...) asparagine glycosylation sites follow: Asn148 and Asn167. The EGF-like 4; calcium-binding domain occupies Asp173–Glu221. Residues Asp222–Thr271 enclose the EGF-like 5; calcium-binding domain. The N-linked (GlcNAc...) asparagine glycan is linked to Asn229. Residues Asn269 and Asn283 are each glycosylated (N-linked (GlcNAc...) asparagine). Residues Asp272–Glu318 form the EGF-like 6; calcium-binding domain. An EGF-like 7; calcium-binding domain is found at Asp319–Lys367. N-linked (GlcNAc...) asparagine glycans are attached at residues Asn405, Asn417, Asn474, and Asn498. Positions Glu482–Thr642 constitute a GAIN-B domain. The Cell attachment site motif lies at Arg506–Asp508. Intrachain disulfides connect Cys595–Cys624 and Cys612–Cys626. A GPS region spans residues Cys595–Thr642. Residues Phe645–Cys672 traverse the membrane as a helical segment. The Cytoplasmic segment spans residues Arg673 to Asn679. A helical transmembrane segment spans residues Thr680–Ile701. Topologically, residues Asp702–Ala711 are extracellular. A glycan (N-linked (GlcNAc...) asparagine) is linked at Asn706. A helical transmembrane segment spans residues Ile712–Leu735. The Cytoplasmic portion of the chain corresponds to Phe736–Lys754. A helical membrane pass occupies residues Met755–Val776. The Extracellular portion of the chain corresponds to Gln777 to Glu792. Residues Thr793–Leu821 traverse the membrane as a helical segment. The Cytoplasmic segment spans residues Arg822–Arg839. The helical transmembrane segment at Leu840–Gly859 threads the bilayer. Residues Ile860–Phe874 are Extracellular-facing. The helical transmembrane segment at Thr875 to Arg897 threads the bilayer. At Asp898 to Gly931 the chain is on the cytoplasmic side.

The protein belongs to the G-protein coupled receptor 2 family. Adhesion G-protein coupled receptor (ADGR) subfamily. In macrophages; but absent from those which are localized within T-cell areas of lymph nodes and spleen. Low level of expression on blood monocytes.

It is found in the cell membrane. Orphan receptor involved in cell adhesion and probably in cell-cell interactions specifically involving cells of the immune system. May play a role in regulatory T-cells (Treg) development. The chain is Adhesion G protein-coupled receptor E1 (Adgre1) from Mus musculus (Mouse).